An 86-amino-acid chain; its full sequence is Arminin 7246 (86 aa).

Residues Met-1 to Ala-18 form the signal peptide. Residues Arg-19 to Ala-57 constitute a propeptide that is removed on maturation. Ala-83 carries the post-translational modification Alanine amide.

This sequence belongs to the arminin family. In terms of tissue distribution, expressed in entodermal epithelium along the body column.

Its subcellular location is the secreted. It is found in the target cell membrane. Functionally, antimicrobial peptide with a broad-spectrum antimicrobial activity. Keeps its antibacterial activity under a wide range of salt concentrations that mimic physiological conditions of human blood, which is surprising, since Hydra is an obligate freshwater animal with nearly no salt tolerance. Does not affect red blood cells. This is Arminin 7246 from Hydra viridissima (Green hydra).